We begin with the raw amino-acid sequence, 147 residues long: Secreted hemophore CSA2 (147 aa).

The N-terminal stretch at 1–20 (MKFSTILAIPFAIAFANAAA) is a signal peptide. In terms of domain architecture, CFEM spans 34–145 (NPYTIYPPVP…SALDAAATAT (112 aa)). 4 cysteine pairs are disulfide-bonded: C62/C102, C66/C97, C76/C83, and C85/C118. A heme-binding site is contributed by D80.

Belongs to the RBT5 family. In terms of assembly, homodimer. The possibility of a transient honotrimer assembly of the holo protein is not ruled out.

The protein resides in the secreted. In terms of biological role, secreted heme-binding protein involved in the utilization of iron from human hemoglobin during hyphal growth. May also play a role in non-hemoglobin iron utilization. Heme transfer occurs between PGA7, RBT5 and CSA2 supporting a model in which the 3 CFEM proteins cooperate in a heme-acquisition system and form a cross-cell wall heme-transfer cascade. The ability to acquire iron from host tissues is a major virulence factor of pathogenic microorganisms. The sequence is that of Secreted hemophore CSA2 (CSA2) from Candida albicans (strain SC5314 / ATCC MYA-2876) (Yeast).